We begin with the raw amino-acid sequence, 98 residues long: Large ribosomal subunit protein uL23 (98 aa).

It belongs to the universal ribosomal protein uL23 family. In terms of assembly, part of the 50S ribosomal subunit. Contacts protein L29, and trigger factor when it is bound to the ribosome.

In terms of biological role, one of the early assembly proteins it binds 23S rRNA. One of the proteins that surrounds the polypeptide exit tunnel on the outside of the ribosome. Forms the main docking site for trigger factor binding to the ribosome. This chain is Large ribosomal subunit protein uL23, found in Marinomonas sp. (strain MWYL1).